A 125-amino-acid polypeptide reads, in one-letter code: Small ribosomal subunit protein uS13 (125 aa).

The interval 92–125 is disordered; it reads RRHLPVHGQRTKTNARTRKGPKKTVAGKKKAGKK.

Belongs to the universal ribosomal protein uS13 family. As to quaternary structure, part of the 30S ribosomal subunit. Forms a loose heterodimer with protein S19. Forms two bridges to the 50S subunit in the 70S ribosome.

Located at the top of the head of the 30S subunit, it contacts several helices of the 16S rRNA. In the 70S ribosome it contacts the 23S rRNA (bridge B1a) and protein L5 of the 50S subunit (bridge B1b), connecting the 2 subunits; these bridges are implicated in subunit movement. Contacts the tRNAs in the A and P-sites. The chain is Small ribosomal subunit protein uS13 from Saccharopolyspora erythraea (strain ATCC 11635 / DSM 40517 / JCM 4748 / NBRC 13426 / NCIMB 8594 / NRRL 2338).